Consider the following 167-residue polypeptide: 3-isopropylmalate dehydratase small subunit (167 aa).

Belongs to the LeuD family. LeuD type 2 subfamily. As to quaternary structure, heterodimer of LeuC and LeuD.

The enzyme catalyses (2R,3S)-3-isopropylmalate = (2S)-2-isopropylmalate. It participates in amino-acid biosynthesis; L-leucine biosynthesis; L-leucine from 3-methyl-2-oxobutanoate: step 2/4. In terms of biological role, catalyzes the isomerization between 2-isopropylmalate and 3-isopropylmalate, via the formation of 2-isopropylmaleate. The sequence is that of 3-isopropylmalate dehydratase small subunit from Sulfurimonas denitrificans (strain ATCC 33889 / DSM 1251) (Thiomicrospira denitrificans (strain ATCC 33889 / DSM 1251)).